The sequence spans 396 residues: Probable sugar efflux transporter (396 aa).

Transmembrane regions (helical) follow at residues 15–35, 50–70, 81–101, 103–123, 136–156, 170–190, 209–229, 246–266, 275–295, 299–319, 333–353, and 364–384; these read VVTLAVAAFIFNTTEFVPVGL, VGIMLTIYAWVVALMSLPFML, LICLFVVFIASHVLSFLSWSF, VLVISRIGVAFAHAIFWSITA, AQALSLIATGTALAMVLGLPL, FFAIGIGALITLLCLIKLLPL, PALMSIYLLTVVVVTAHYTAY, FATALLLLLGGAGIIGSVIFG, ALVSTAIALLLVCLALLLPAA, IHLGVLSIFWGIAMMIIGLGM, VAMALFSGIFNIGIGAGALVG, and MIGYVGAVPAFAALIWSIIIF.

The protein belongs to the major facilitator superfamily. SotB (TC 2.A.1.2) family.

It is found in the cell inner membrane. Functionally, involved in the efflux of sugars. The physiological role may be the reduction of the intracellular concentration of toxic sugars or sugar metabolites. This is Probable sugar efflux transporter from Escherichia coli O127:H6 (strain E2348/69 / EPEC).